The primary structure comprises 365 residues: Tartrate dehydrogenase/decarboxylase (365 aa).

The Mn(2+) site is built by aspartate 225, aspartate 250, and aspartate 254.

Belongs to the isocitrate and isopropylmalate dehydrogenases family. Homodimer. Mg(2+) serves as cofactor. Mn(2+) is required as a cofactor. It depends on K(+) as a cofactor.

The protein resides in the cytoplasm. The enzyme catalyses tartrate + NAD(+) = 2-hydroxy-3-oxosuccinate + NADH + H(+). It carries out the reaction (2R,3S)-tartrate + NAD(+) = 2-hydroxy-3-oxosuccinate + NADH + H(+). It catalyses the reaction (2R,3R)-tartrate + NAD(+) = 2-hydroxy-3-oxosuccinate + NADH + H(+). The catalysed reaction is (2R,3R)-tartrate + H(+) = (R)-glycerate + CO2. The enzyme catalyses (R)-malate + NAD(+) = pyruvate + CO2 + NADH. It functions in the pathway carbohydrate acid metabolism; tartrate degradation; 2-hydroxy-3-oxosuccinate from L-tartrate: step 1/1. It participates in carbohydrate acid metabolism; tartrate degradation; 2-hydroxy-3-oxosuccinate from meso-tartrate: step 1/1. The protein operates within carbohydrate acid metabolism; tartrate degradation; D-glycerate from L-tartrate: step 1/1. Its function is as follows. Has multiple catalytic activities. Apart from catalyzing the oxidation of (+)-tartrate to oxaloglycolate, also converts meso-tartrate to D-glycerate and catalyzes the oxidative decarboxylation of D-malate to pyruvate. The chain is Tartrate dehydrogenase/decarboxylase from Pseudomonas putida (Arthrobacter siderocapsulatus).